The sequence spans 329 residues: Tryptophan--tRNA ligase (329 aa).

ATP contacts are provided by residues 9 to 11 and 17 to 18; these read QPS and GN. Residues 10–18 carry the 'HIGH' region motif; the sequence is PSGIPTIGN. Residue D133 participates in L-tryptophan binding. Residues 145–147, V184, and 193–197 each bind ATP; these read GDD and KMSKS. Positions 193–197 match the 'KMSKS' region motif; sequence KMSKS.

The protein belongs to the class-I aminoacyl-tRNA synthetase family. In terms of assembly, homodimer.

The protein localises to the cytoplasm. The catalysed reaction is tRNA(Trp) + L-tryptophan + ATP = L-tryptophyl-tRNA(Trp) + AMP + diphosphate + H(+). In terms of biological role, catalyzes the attachment of tryptophan to tRNA(Trp). This Staphylococcus epidermidis (strain ATCC 35984 / DSM 28319 / BCRC 17069 / CCUG 31568 / BM 3577 / RP62A) protein is Tryptophan--tRNA ligase.